A 157-amino-acid chain; its full sequence is Protein Smg (157 aa).

It belongs to the Smg family.

This chain is Protein Smg, found in Buchnera aphidicola subsp. Schizaphis graminum (strain Sg).